Consider the following 329-residue polypeptide: Probable CTD kinase subunit alpha homolog (329 aa).

The 276-residue stretch at 22-297 (YEKIRIIGEG…VEQVVGSKYF (276 aa)) folds into the Protein kinase domain. ATP is bound by residues 28-36 (IGEGTFGQV) and Lys49. The Proton acceptor role is filled by Asp139.

Belongs to the protein kinase superfamily. CMGC Ser/Thr protein kinase family. CDC2/CDKX subfamily. As to quaternary structure, component of the CTDK-I complex.

The protein resides in the nucleus. It is found in the nucleolus. It catalyses the reaction [DNA-directed RNA polymerase] + ATP = phospho-[DNA-directed RNA polymerase] + ADP + H(+). Catalytic subunit of the CTDK-I complex, which hyperphosphorylates the C-terminal heptapeptide repeat domain (CTD) of the largest RNA polymerase II subunit. Involved in RNA polymerase II transcriptional elongation and pre-mRNA 3'-end processing. In Encephalitozoon cuniculi (strain GB-M1) (Microsporidian parasite), this protein is Probable CTD kinase subunit alpha homolog (CTK1).